The following is a 205-amino-acid chain: Large ribosomal subunit protein uL4 (205 aa).

The disordered stretch occupies residues Arg43–Asn95. Over residues Ala48–His57 the composition is skewed to basic and acidic residues. Basic residues predominate over residues Ser58 to Gly69.

This sequence belongs to the universal ribosomal protein uL4 family. As to quaternary structure, part of the 50S ribosomal subunit.

One of the primary rRNA binding proteins, this protein initially binds near the 5'-end of the 23S rRNA. It is important during the early stages of 50S assembly. It makes multiple contacts with different domains of the 23S rRNA in the assembled 50S subunit and ribosome. In terms of biological role, forms part of the polypeptide exit tunnel. In Bordetella bronchiseptica (strain ATCC BAA-588 / NCTC 13252 / RB50) (Alcaligenes bronchisepticus), this protein is Large ribosomal subunit protein uL4.